Here is a 305-residue protein sequence, read N- to C-terminus: MGTSGIEIFAALNDFTDAIVSVPESVCGKFTSLKEIDAQVRDIRQNVIQEIGVVLKNEKNDELSGEERCERLQKTLKEILPYSDSKICLATDAMNNIKSCIDRLDAGFEYVELEIPQQLRLGYPDDRALMNYHSTVTPQTSERRRETRRHQNNQHSQQYSSQERSSSYNNFEDASSPQSSYHTPTKRRKNAVPRKSSSPPLSSTKHAPQSTERRPVRRSESRLKQTNGEPLVKHDTLDSSDISREGEQLYCYCQQVSYGQMIGCDNENCKREWFHLPCVGLVEPPKGIWYCKECEELAKSSESRQ.

The segment at 135–239 (TVTPQTSERR…PLVKHDTLDS (105 aa)) is disordered. Residues 153–167 (NQHSQQYSSQERSSS) are compositionally biased toward low complexity. Polar residues-rich tracts occupy residues 168–183 (YNNF…SYHT) and 195–210 (KSSS…APQS). Tyr181 bears the Phosphotyrosine mark. A Phosphothreonine modification is found at Thr183. Phosphoserine occurs at positions 197 and 198. Over residues 211–223 (TERRPVRRSESRL) the composition is skewed to basic and acidic residues. A PHD-type zinc finger spans residues 248–297 (QLYCYCQQVSYGQMIGCDNENCKREWFHLPCVGLVEPPKGIWYCKECEEL). Residues Cys251, Cys253, Cys264, Cys269, His275, Cys278, Cys291, and Cys294 each contribute to the Zn(2+) site.

Belongs to the ING family. Interacts with H3K4me3 and to a lesser extent with H3K4me2. Component of the clr6 histone deacetylase complex I'composed of at least clr6, png2, prw1, pst1 and sds3.

The protein localises to the cytoplasm. It localises to the nucleus. In terms of biological role, component of the clr6 histone deacetylase complex I' responsible for the deacetylation of lysine residues on the N-terminal part of the core histones (H2A, H2B, H3 and H4). Histone deacetylation gives a tag for epigenetic repression and plays an important role in transcriptional regulation, cell cycle progression and developmental events. Has a role in silencing of mating type genes. This chain is Chromatin modification-related protein png2 (png2), found in Schizosaccharomyces pombe (strain 972 / ATCC 24843) (Fission yeast).